Here is a 102-residue protein sequence, read N- to C-terminus: RNA-binding protein Hfq (102 aa).

The Sm domain occupies 9–68; it reads DPFLNALRRERVPVSIYLVNGIKLQGQIESFDQFVILLKNTVSQMVYKHAISTVVPSRPV. A disordered region spans residues 63–102; the sequence is VPSRPVSHHSNNAGGSTSSNYHHGSSAQNTSAQQDSEENE. The segment covering 70-96 has biased composition (polar residues); it reads HHSNNAGGSTSSNYHHGSSAQNTSAQQ.

Belongs to the Hfq family. In terms of assembly, homohexamer.

Functionally, RNA chaperone that binds small regulatory RNA (sRNAs) and mRNAs to facilitate mRNA translational regulation in response to envelope stress, environmental stress and changes in metabolite concentrations. Also binds with high specificity to tRNAs. This is RNA-binding protein Hfq from Escherichia coli O17:K52:H18 (strain UMN026 / ExPEC).